The following is a 152-amino-acid chain: Anaerobic nitrite reductase SYMA (152 aa).

Positions 2–151 (ALTERQEALL…LVATIKAEMK (150 aa)) constitute a Globin domain. The Homodimerization motif lies at 35-39 (EAAPE). Residues Ser-45, Lys-59, His-63, Arg-93, and His-98 each coordinate heme b. Residues 105-117 (DPHFEVMKGALLG) carry the Homodimerization motif.

It belongs to the plant globin family. In terms of assembly, homodimer. Heme b serves as cofactor. In terms of tissue distribution, root nodules.

The protein resides in the cytoplasm. It is found in the nucleus. The enzyme catalyses Fe(III)-heme b-[protein] + nitric oxide + H2O = Fe(II)-heme b-[protein] + nitrite + 2 H(+). Functionally, phytoglobin that reduces nitrite to nitric oxide (NO) under anoxic conditions (e.g. during flooding or in waterlogged soil) and upon root nodulation. Required for general plant development and during nodulation, especially for the onset of symbiosis. Monitors nitric oxide (NO) levels during early phase of the nitrogen-fixing symbiosis and buffers oxygen in functioning nodules. May not function as an oxygen storage or transport protein. Has an unusually high affinity for O(2) through a hexacoordinate heme iron because of a very low dissociation constant. In Casuarina glauca (Swamp oak), this protein is Anaerobic nitrite reductase SYMA.